Reading from the N-terminus, the 1054-residue chain is FERM, ARHGEF and pleckstrin domain-containing protein 2 (1054 aa).

In terms of domain architecture, FERM spans 44–324; that stretch reads LHLRVKLLDN…EYHTFFRLLD (281 aa). Residues Ser389 and Ser439 each carry the phosphoserine modification. The disordered stretch occupies residues 421 to 527; that stretch reads EFKDSSSSLT…GAGMDCEEPR (107 aa). Positions 468-492 are enriched in low complexity; sequence PGPGLSTKSPQPSPSSRKSPLSLSP. In terms of domain architecture, DH spans 535–726; sequence EAYFIVKEIL…TEVTTTLQHI (192 aa). The PH 1 domain occupies 755–852; sequence EFIREGCLHK…WMLDLNSAIQ (98 aa). Positions 856–894 are disordered; sequence SGGDTAPALPGRTVCTRPPRSPNEVSLEQESEDDARGVR. The region spanning 929 to 1026 is the PH 2 domain; it reads ENQLSGYLLR…WMEVIQGASS (98 aa). The segment at 1029–1054 is disordered; the sequence is GRAPSIVQDGPQPSSGLEGMVRGKEE.

Interacts with PLXNA1. Interaction with PLXNA1 or PIP5K1C lowers its guanine nucleotide exchange activity. Dissociates from PLXNA1 when SEMA3A binds to the receptor. Interacts with PIP5K1C via its FERM domain. The interaction with PIP5K1C is enhanced by SEMA3A binding. Interacts with RAC1.

In terms of biological role, functions as a guanine nucleotide exchange factor that activates RAC1. May have relatively low activity. Plays a role in the response to class 3 semaphorins and remodeling of the actin cytoskeleton. Plays a role in TNFSF11-mediated osteoclast differentiation, especially in podosome rearrangement and reorganization of the actin cytoskeleton. Regulates the activation of ITGB3, integrin signaling and cell adhesion. This Homo sapiens (Human) protein is FERM, ARHGEF and pleckstrin domain-containing protein 2 (FARP2).